The primary structure comprises 245 residues: Pre-hexon-linking protein VIII (245 aa).

The propeptide occupies 116–167; sequence LMVGRTEGRMQLAGGLTEGRVQLSGGFHGRPLVRGRSRRPPRWCGAELTGNG.

This sequence belongs to the adenoviridae hexon-linking protein family. In terms of assembly, interacts with the peripentonal hexons as well as the hexons in the facets. Part of a complex composed of the core-capsid bridging protein, the endosome lysis protein VI and the hexon-linking protein VIII; these interactions bridge the virus core to the capsid. Cleaved by the viral protease during virion maturation. May cause the middle segment to be shed from the capsid.

The protein localises to the virion. Its subcellular location is the host nucleus. Its function is as follows. Structural component of the virion that acts as a cement protein on the capsid interior and which glue the peripentonal hexons and group-of-nine hexons together. The chain is Pre-hexon-linking protein VIII from Galliformes (FAdV-1).